We begin with the raw amino-acid sequence, 332 residues long: UDP-N-acetylenolpyruvoylglucosamine reductase (332 aa).

The 199-residue stretch at 45–243 (RAGGHAAYFY…LGTRIKTQPL (199 aa)) folds into the FAD-binding PCMH-type domain. R194 is an active-site residue. S250 acts as the Proton donor in catalysis. Residue E320 is part of the active site.

Belongs to the MurB family. It depends on FAD as a cofactor.

It is found in the cytoplasm. It carries out the reaction UDP-N-acetyl-alpha-D-muramate + NADP(+) = UDP-N-acetyl-3-O-(1-carboxyvinyl)-alpha-D-glucosamine + NADPH + H(+). It participates in cell wall biogenesis; peptidoglycan biosynthesis. Functionally, cell wall formation. The sequence is that of UDP-N-acetylenolpyruvoylglucosamine reductase from Nitrosomonas eutropha (strain DSM 101675 / C91 / Nm57).